The following is a 1365-amino-acid chain: Polyprotein ABA-1 (1365 aa).

It belongs to the NPA family. Nematode polyprotein allergens (NPAs) are synthesized as large polypeptides that are subsequently proteolytically cleaved to active polypeptide units. As to expression, pseudocoelomic fluid.

In terms of biological role, has high binding affinity for fatty acids and retinoids. The sequence is that of Polyprotein ABA-1 (ABA-1) from Ascaris suum (Pig roundworm).